The chain runs to 615 residues: Elongation factor 4 (615 aa).

Positions Ala17 to Val198 constitute a tr-type G domain. Residues Asp29–Thr34 and Asn145–Asp148 contribute to the GTP site.

This sequence belongs to the TRAFAC class translation factor GTPase superfamily. Classic translation factor GTPase family. LepA subfamily.

It is found in the cell membrane. It catalyses the reaction GTP + H2O = GDP + phosphate + H(+). Its function is as follows. Required for accurate and efficient protein synthesis under certain stress conditions. May act as a fidelity factor of the translation reaction, by catalyzing a one-codon backward translocation of tRNAs on improperly translocated ribosomes. Back-translocation proceeds from a post-translocation (POST) complex to a pre-translocation (PRE) complex, thus giving elongation factor G a second chance to translocate the tRNAs correctly. Binds to ribosomes in a GTP-dependent manner. The polypeptide is Elongation factor 4 (Clavibacter sepedonicus (Clavibacter michiganensis subsp. sepedonicus)).